The chain runs to 204 residues: Lipoprotein signal peptidase (204 aa).

Positions 1–42 (MAEAERIIGTPDIPDAAGEGQERPDADPEREQQEQEQAPERT) are disordered. Residues 20–42 (GQERPDADPEREQQEQEQAPERT) show a composition bias toward basic and acidic residues. Helical transmembrane passes span 50 to 70 (VLFA…MLVV), 100 to 120 (FGEA…VVIA), and 126 to 146 (LHSL…LGNL). Residues Asp163 and Asp177 contribute to the active site. A helical membrane pass occupies residues 170 to 190 (FAVFNLADSAIVCGGILIVIL).

The protein belongs to the peptidase A8 family.

It is found in the cell membrane. It carries out the reaction Release of signal peptides from bacterial membrane prolipoproteins. Hydrolyzes -Xaa-Yaa-Zaa-|-(S,diacylglyceryl)Cys-, in which Xaa is hydrophobic (preferably Leu), and Yaa (Ala or Ser) and Zaa (Gly or Ala) have small, neutral side chains.. It functions in the pathway protein modification; lipoprotein biosynthesis (signal peptide cleavage). In terms of biological role, this protein specifically catalyzes the removal of signal peptides from prolipoproteins. This Streptomyces coelicolor (strain ATCC BAA-471 / A3(2) / M145) protein is Lipoprotein signal peptidase.